Reading from the N-terminus, the 254-residue chain is Type III pantothenate kinase (254 aa).

ATP is bound at residue aspartate 6–valine 13. Substrate is bound by residues tyrosine 100 and glycine 107–arginine 110. The active-site Proton acceptor is aspartate 109. Position 129 (aspartate 129) interacts with K(+). Threonine 132 contacts ATP. Threonine 184 serves as a coordination point for substrate.

This sequence belongs to the type III pantothenate kinase family. As to quaternary structure, homodimer. NH4(+) is required as a cofactor. The cofactor is K(+).

It is found in the cytoplasm. It catalyses the reaction (R)-pantothenate + ATP = (R)-4'-phosphopantothenate + ADP + H(+). Its pathway is cofactor biosynthesis; coenzyme A biosynthesis; CoA from (R)-pantothenate: step 1/5. Functionally, catalyzes the phosphorylation of pantothenate (Pan), the first step in CoA biosynthesis. The protein is Type III pantothenate kinase of Halalkalibacterium halodurans (strain ATCC BAA-125 / DSM 18197 / FERM 7344 / JCM 9153 / C-125) (Bacillus halodurans).